Consider the following 582-residue polypeptide: MKRSMYAGRVREEHIGTTITLKGWVSRRRDLGGLIFIDLRDREGVMQLVINPEEVSSDVMATAERLRSEYVIEVEGFVEARQQANDKLATGMVELKVSALTILNTAKTTPFEIKDDVEVSDDTRLRYRYLDLRRPEMLENFKLRAKVTHSIRNYLDDLEFIDVETPMLTKSTPEGARDYLVPSRVSQGHFYALPQSPQITKQLLMNAGFDRYYQIVKCFRDEDLRGDRQPEFTQVDLETSFLSEQEIQDIVEGMIAKVMKETKEIDVTLPFPRMSYDVAMNSYGSDKPDTRFEMLLQDLTVTVKGIDFKVFSEAPAVKAIVVKGNADRYSRKDIDKLTEFAKQFGAKGLAWVKVTDGQLAGPVAKFLTAIETELSSQLKLAENDLVLFVADTLEVANNTLGALRNRIAKDLDMIDQSQFNFLWVVDWPMFEWSEEEGRYMSAHHPFTLPTPESAHELEGDLAKVRAIAYDIVLNGYELGGGSLRINQKEMQERMFKALGFTADEANDQFGFLLEAMDYGFPPHGGLAIGLDRFVMLLAGKDNIREVIAFPKNNKASDPMTQAPSLVSENQLEELSLQIESHD.

Glutamate 174 is a binding site for L-aspartate. The tract at residues 198-201 (QITK) is aspartate. L-aspartate is bound at residue arginine 220. Residues 220-222 (RDE) and glutamine 229 each bind ATP. L-aspartate is bound at residue histidine 443. ATP is bound at residue glutamate 477. Arginine 484 contacts L-aspartate. 529-532 (GLDR) is a binding site for ATP.

The protein belongs to the class-II aminoacyl-tRNA synthetase family. Type 1 subfamily. Homodimer.

The protein resides in the cytoplasm. The enzyme catalyses tRNA(Asp) + L-aspartate + ATP = L-aspartyl-tRNA(Asp) + AMP + diphosphate. Catalyzes the attachment of L-aspartate to tRNA(Asp) in a two-step reaction: L-aspartate is first activated by ATP to form Asp-AMP and then transferred to the acceptor end of tRNA(Asp). In Streptococcus pyogenes serotype M18 (strain MGAS8232), this protein is Aspartate--tRNA ligase.